The following is a 339-amino-acid chain: Protein pelota homolog (339 aa).

It belongs to the eukaryotic release factor 1 family. Pelota subfamily. As to quaternary structure, monomer. A divalent metal cation serves as cofactor.

It localises to the cytoplasm. Functionally, may function in recognizing stalled ribosomes, interact with stem-loop structures in stalled mRNA molecules, and effect endonucleolytic cleavage of the mRNA. May play a role in the release non-functional ribosomes and degradation of damaged mRNAs. Has endoribonuclease activity. The polypeptide is Protein pelota homolog (pelA) (Thermoplasma acidophilum (strain ATCC 25905 / DSM 1728 / JCM 9062 / NBRC 15155 / AMRC-C165)).